Consider the following 107-residue polypeptide: Probable monothiol glutaredoxin 2 (107 aa).

Residues 7–107 (FKFIENEIKN…LEKMLKAYTR (101 aa)) enclose the Glutaredoxin domain. Lys-24 is a glutathione binding site. [2Fe-2S] cluster is bound at residue Cys-32. Glutathione contacts are provided by residues Arg-61, Phe-73, and 86–87 (CD).

This sequence belongs to the glutaredoxin family. Monothiol subfamily.

In Rickettsia conorii (strain ATCC VR-613 / Malish 7), this protein is Probable monothiol glutaredoxin 2 (grxC2).